The sequence spans 259 residues: Pimeloyl-[acyl-carrier protein] methyl ester esterase (259 aa).

Substrate is bound by residues Trp-18, 78-79, and 139-143; these read SL and FLALD. The active-site Nucleophile is the Ser-78. Catalysis depends on residues Asp-203 and His-231. His-231 is a substrate binding site.

The protein belongs to the AB hydrolase superfamily. Carboxylesterase BioH family. Monomer.

It is found in the cytoplasm. It carries out the reaction 6-carboxyhexanoyl-[ACP] methyl ester + H2O = 6-carboxyhexanoyl-[ACP] + methanol + H(+). Its pathway is cofactor biosynthesis; biotin biosynthesis. Functionally, the physiological role of BioH is to remove the methyl group introduced by BioC when the pimeloyl moiety is complete. It allows to synthesize pimeloyl-ACP via the fatty acid synthetic pathway through the hydrolysis of the ester bonds of pimeloyl-ACP esters. This Stenotrophomonas maltophilia (strain K279a) protein is Pimeloyl-[acyl-carrier protein] methyl ester esterase.